A 486-amino-acid chain; its full sequence is Adenylate kinase 8 (486 aa).

Adenylate kinase regions lie at residues 58–258 (PRII…NFIC) and 269–471 (PRIL…SRLV). Residue 67–72 (ASGKKT) participates in ATP binding. The NMP 1 stretch occupies residues 87–112 (TFCDILKDDSDLTRAAQSYYDKKQNV). AMP is bound by residues 139–142 (AIPK) and Arg202. Positions 176-205 (GKRIDPVTGDVYHVTFMWPESEEVAQRLET) are LID 1. Residue 278-283 (GAGRNL) participates in ATP binding. An NMP 2 region spans residues 298–327 (CCGELLKAVSADESHMGELIKPYLESEQQV). AMP-binding positions include 325-327 (QQV) and 354-357 (GFPR). The tract at residues 391–424 (LRAVDPVTGEWYHSVYKPPPGPEVQARLRFNPQH) is LID 2. An ATP-binding site is contributed by Arg392. Arg432 provides a ligand contact to AMP.

It belongs to the adenylate kinase family.

It localises to the cytoplasm. It is found in the cytosol. It catalyses the reaction AMP + ATP = 2 ADP. The enzyme catalyses a 2'-deoxyribonucleoside 5'-diphosphate + ATP = a 2'-deoxyribonucleoside 5'-triphosphate + ADP. It carries out the reaction a ribonucleoside 5'-diphosphate + ATP = a ribonucleoside 5'-triphosphate + ADP. In terms of biological role, nucleoside monophosphate (NMP) kinase that catalyzes the reversible transfer of the terminal phosphate group between nucleoside triphosphates and monophosphates. Has highest activity toward AMP, and weaker activity toward dAMP, CMP and dCMP. Also displays broad nucleoside diphosphate kinase activity. In Danio rerio (Zebrafish), this protein is Adenylate kinase 8 (ak8).